A 233-amino-acid chain; its full sequence is MADS-box transcription factor 20 (233 aa).

The MADS-box domain occupies Met1–His61. Positions Glu91 to Cys184 constitute a K-box domain.

Expressed in developing seeds and seedling shoots.

Its subcellular location is the nucleus. Probable transcription factor. The protein is MADS-box transcription factor 20 (MADS20) of Oryza sativa subsp. japonica (Rice).